An 887-amino-acid chain; its full sequence is DNA gyrase subunit A (887 aa).

One can recognise a Topo IIA-type catalytic domain in the interval Leu35 to Leu501. Tyr123 acts as the O-(5'-phospho-DNA)-tyrosine intermediate in catalysis. The short motif at Gln528 to Gly534 is the GyrA-box element. The segment at Lys811–Arg865 is disordered. Residues Asp813–Gln823 show a composition bias toward acidic residues.

The protein belongs to the type II topoisomerase GyrA/ParC subunit family. As to quaternary structure, heterotetramer, composed of two GyrA and two GyrB chains. In the heterotetramer, GyrA contains the active site tyrosine that forms a transient covalent intermediate with DNA, while GyrB binds cofactors and catalyzes ATP hydrolysis.

The protein resides in the cytoplasm. It carries out the reaction ATP-dependent breakage, passage and rejoining of double-stranded DNA.. Its function is as follows. A type II topoisomerase that negatively supercoils closed circular double-stranded (ds) DNA in an ATP-dependent manner to modulate DNA topology and maintain chromosomes in an underwound state. Negative supercoiling favors strand separation, and DNA replication, transcription, recombination and repair, all of which involve strand separation. Also able to catalyze the interconversion of other topological isomers of dsDNA rings, including catenanes and knotted rings. Type II topoisomerases break and join 2 DNA strands simultaneously in an ATP-dependent manner. The chain is DNA gyrase subunit A from Staphylococcus aureus (strain MSSA476).